Consider the following 197-residue polypeptide: Xanthine phosphoribosyltransferase (197 aa).

Xanthine contacts are provided by Leu-20 and Thr-27. 128 to 132 (ANGQA) is a binding site for 5-phospho-alpha-D-ribose 1-diphosphate. Lys-156 is a binding site for xanthine.

Belongs to the purine/pyrimidine phosphoribosyltransferase family. Xpt subfamily. As to quaternary structure, homodimer.

The protein localises to the cytoplasm. It carries out the reaction XMP + diphosphate = xanthine + 5-phospho-alpha-D-ribose 1-diphosphate. The protein operates within purine metabolism; XMP biosynthesis via salvage pathway; XMP from xanthine: step 1/1. In terms of biological role, converts the preformed base xanthine, a product of nucleic acid breakdown, to xanthosine 5'-monophosphate (XMP), so it can be reused for RNA or DNA synthesis. This chain is Xanthine phosphoribosyltransferase, found in Lactococcus lactis subsp. cremoris (strain MG1363).